We begin with the raw amino-acid sequence, 426 residues long: MKHLTEMVRQHKAGKTNAIYAVCSAHPLVLEAAIRYASANQTPLLIEATSNQVDQFGGYTGMTPADFRGFVCQLADSLNFPQDALILGGDHLGPNRWQNLPAAQAMANADDLIKSYVAAGFKKIHLDCSMSCQDDPIPLTDDIVAERAARLAKVAEETCLEHFGEADLEYVIGTEVPVPGGAHETLSELAVTTPDAARATLEAHRHAFEKQGLNAIWPRIIALVVQPGVEFDHTNVIDYQPAKASALSQMVENYETLIFEAHSTDYQTPQSLRQLVIDHFAILKVGPALTFALREALFSLAAIEEELVPAKVCSGLRQVLEDVMLDRPEYWQSHYHGDGNARRLARGYSYSDRVRYYWPDSQIDDAFAHLVRNLADSPIPLPLISQYLPLQYVKVRSGELQPTPRELIINHIQDILAQYHTACEGQ.

The protein belongs to the GatZ/KbaZ family. KbaZ subfamily. In terms of assembly, forms a complex with KbaY.

It participates in carbohydrate metabolism; D-tagatose 6-phosphate degradation; D-glyceraldehyde 3-phosphate and glycerone phosphate from D-tagatose 6-phosphate: step 2/2. Functionally, component of the tagatose-1,6-bisphosphate aldolase KbaYZ that is required for full activity and stability of the Y subunit. Could have a chaperone-like function for the proper and stable folding of KbaY. When expressed alone, KbaZ does not show any aldolase activity. This chain is D-tagatose-1,6-bisphosphate aldolase subunit KbaZ, found in Escherichia coli (strain ATCC 8739 / DSM 1576 / NBRC 3972 / NCIMB 8545 / WDCM 00012 / Crooks).